A 398-amino-acid chain; its full sequence is Chalcone synthase 1 (398 aa).

Residue 58–65 (KFKRMCDK) participates in CoA binding. Catalysis depends on C167, which acts as the Acyl-thioester intermediate. Substrate contacts are provided by residues T200 and 219-220 (GD). CoA is bound at residue A311.

It belongs to the thiolase-like superfamily. Chalcone/stilbene synthases family. As to quaternary structure, homodimer.

The catalysed reaction is (E)-4-coumaroyl-CoA + 3 malonyl-CoA + 3 H(+) = 2',4,4',6'-tetrahydroxychalcone + 3 CO2 + 4 CoA. It functions in the pathway secondary metabolite biosynthesis; flavonoid biosynthesis. Its function is as follows. The primary product of this enzyme is 4,2',4',6'-tetrahydroxychalcone (also termed naringenin-chalcone or chalcone) which can under specific conditions spontaneously isomerize into naringenin. The protein is Chalcone synthase 1 (CHS1) of Oryza sativa subsp. indica (Rice).